Here is a 167-residue protein sequence, read N- to C-terminus: Menaquinol:cytochrome c reductase iron-sulfur subunit (167 aa).

One can recognise a Rieske domain in the interval 59 to 158; it reads TKEPQRFDFK…QEVKDGFLYL (100 aa). [2Fe-2S] cluster is bound by residues Cys-100, His-102, Cys-121, and His-124. Cys-105 and Cys-123 are joined by a disulfide.

This sequence belongs to the Rieske iron-sulfur protein family. As to quaternary structure, the main subunits of the menaquinol:cytochrome c complex are a Rieske-type iron-sulfur protein (QcrA), a cytochrome b (QcrB) and a cytochrome c (QcrC). It depends on [2Fe-2S] cluster as a cofactor.

Component of the menaquinol:cytochrome c reductase complex. The Rieske protein is a high potential 2Fe-2S protein. This is Menaquinol:cytochrome c reductase iron-sulfur subunit (qcrA) from Bacillus subtilis (strain 168).